We begin with the raw amino-acid sequence, 216 residues long: Ethylene-inducing xylanase (216 aa).

An N-terminal signal peptide occupies residues 1-19 (MVSFSSLFVAACAAVTAFA). One can recognise a GH11 domain in the interval 28 to 216 (AITTSQQGTS…SSGSSDITVS (189 aa)). The active-site Nucleophile is Glu-112. The active-site Proton donor is the Glu-203.

Belongs to the glycosyl hydrolase 11 (cellulase G) family.

The protein localises to the secreted. The enzyme catalyses Endohydrolysis of (1-&gt;4)-beta-D-xylosidic linkages in xylans.. The protein operates within glycan degradation; xylan degradation. In terms of biological role, endo-1,4-beta-xylanase involved in the hydrolysis of xylan, a major structural heterogeneous polysaccharide found in plant biomass representing the second most abundant polysaccharide in the biosphere, after cellulose. Acts as a pathogen-associated molecular pattern (PAMP) that can trigger plant cell death. Triggers a series of immune responses in citrus fruit and enhanced the resistance of citrus and other fruit against fungal pathogens. In Penicillium digitatum (strain Pd1 / CECT 20795) (Green mold), this protein is Ethylene-inducing xylanase.